Here is a 445-residue protein sequence, read N- to C-terminus: POU domain, class 3, transcription factor 2 (445 aa).

Disordered regions lie at residues 63 to 173, 203 to 269, 336 to 361, and 411 to 445; these read TALS…WRSA, LGAG…TPTS, EADS…KKRT, and EKRM…TPVQ. Residues 68–90 are compositionally biased toward gly residues; that stretch reads GGSGGGGGGGGGGGGGGGGGGDG. Over residues 125 to 151 the composition is skewed to low complexity; the sequence is QQQHQQQQQQQQQQQQQQQQQQQQQQQ. Basic and acidic residues predominate over residues 217-226; that stretch reads LRDAHDEPHH. The segment covering 227 to 237 has biased composition (basic residues); it reads ADHHPHPHSHP. Pro residues predominate over residues 239–253; that stretch reads QQPPPPPPPQGPPGH. In terms of domain architecture, POU-specific spans 264 to 338; it reads EDTPTSDDLE…LLNKWLEEAD (75 aa). At Ser-343 the chain carries Phosphoserine. Residues 356–415 constitute a DNA-binding region (homeobox); it reads KRKKRTSIEVSVKGALESHFLKCPKPSAQEITSLADSLQLEKEVVRVWFCNRRQKEKRMT.

It belongs to the POU transcription factor family. Class-3 subfamily. As to quaternary structure, interacts with PQBP1. Interaction with ISL1. Expressed specifically at high levels in the brain.

It is found in the nucleus. Functionally, transcription factor that plays a key role in neuronal differentiation. Binds preferentially to the recognition sequence which consists of two distinct half-sites, ('GCAT') and ('TAAT'), separated by a non-conserved spacer region of 0, 2, or 3 nucleotides. Acts as a transcriptional activator when binding cooperatively with SOX4, SOX11, or SOX12 to gene promoters. The combination of three transcription factors, ASCL1, POU3F2/BRN2 and MYT1L, is sufficient to reprogram fibroblasts and other somatic cells into induced neuronal (iN) cells in vitro. Acts downstream of ASCL1, accessing chromatin that has been opened by ASCL1, and promotes transcription of neuronal genes. The protein is POU domain, class 3, transcription factor 2 (Pou3f2) of Rattus norvegicus (Rat).